Here is a 209-residue protein sequence, read N- to C-terminus: Ribonuclease HII (209 aa).

The RNase H type-2 domain occupies 7-198 (GPVAGVDEAG…VAKAHQEWLH (192 aa)). A divalent metal cation is bound by residues aspartate 13, glutamate 14, and aspartate 107.

This sequence belongs to the RNase HII family. It depends on Mn(2+) as a cofactor. The cofactor is Mg(2+).

It localises to the cytoplasm. It carries out the reaction Endonucleolytic cleavage to 5'-phosphomonoester.. Its function is as follows. Endonuclease that specifically degrades the RNA of RNA-DNA hybrids. The chain is Ribonuclease HII from Corynebacterium glutamicum (strain R).